The sequence spans 306 residues: Methionyl-tRNA formyltransferase (306 aa).

Position 109–112 (Ser109–Pro112) interacts with (6S)-5,6,7,8-tetrahydrofolate.

Belongs to the Fmt family.

The enzyme catalyses L-methionyl-tRNA(fMet) + (6R)-10-formyltetrahydrofolate = N-formyl-L-methionyl-tRNA(fMet) + (6S)-5,6,7,8-tetrahydrofolate + H(+). In terms of biological role, attaches a formyl group to the free amino group of methionyl-tRNA(fMet). The formyl group appears to play a dual role in the initiator identity of N-formylmethionyl-tRNA by promoting its recognition by IF2 and preventing the misappropriation of this tRNA by the elongation apparatus. In Sphingopyxis alaskensis (strain DSM 13593 / LMG 18877 / RB2256) (Sphingomonas alaskensis), this protein is Methionyl-tRNA formyltransferase.